Consider the following 385-residue polypeptide: Heterogeneous nuclear ribonucleoprotein 87F (385 aa).

2 RRM domains span residues 24-101 (RKLF…RAVP) and 115-192 (KKLF…KAIA). Disordered regions lie at residues 192-289 (AKQD…WNGG) and 305-385 (GNGG…NRRY). Composition is skewed to gly residues over residues 199 to 289 (QGGG…WNGG) and 305 to 317 (GNGG…GGFG). Over residues 319–336 (EYQQSYGGGPQRNSNFGN) the composition is skewed to polar residues. 2 stretches are compositionally biased toward gly residues: residues 344–362 (QGGG…GQGF) and 369–385 (TGGG…NRRY).

The protein resides in the nucleus. It is found in the cytoplasm. Its function is as follows. This protein is a component of ribonucleosomes. Could be needed to organize a concentration gradient of a dorsalizing morphogen (Dm) originating in the germinal vesicle. The polypeptide is Heterogeneous nuclear ribonucleoprotein 87F (Hrb87F) (Drosophila melanogaster (Fruit fly)).